A 546-amino-acid polypeptide reads, in one-letter code: MLRSTISLLMNSAAQKTMTNSNFVLNAPKITLTKVEQNICNLLNDYTDLYNQKYHNKPEPLTLRITGGWVRDKLLGQGSHDLDIAINVMSGEQFATGLNEYLQQHYAKYGAKPHNIHKIDKNPEKSKHLETATTKLFGVEVDFVNLRSEKYTELSRIPKVCFGTPEEDALRRDATLNALFYNIHKGEVEDFTKRGLQDLKDGVLRTPLPAKQTFLDDPLRVLRLIRFASRFNFTIDPEVMAEMGDPQINVAFNSKISRERVGVEMEKILVGPTPLLALQLIQRAHLENVIFFWHNDSSVVKFNEENCQDMDKINHVYNDNILNSHLKSFIELYPMFLEKLPILREKIGRSPGFQQNFILSAILSPMANLQIIGNPKKKINNLVSVTESIVKEGLKLSKNDAAVIAKTVDSICSYEEILAKFADRSQLKKSEIGIFLRNFNGEWETAHFASLSDAFLKIPKLETKKIELLFQNYNEFYSYIFDNNLNNCHELKPIVDGKQMAKLLQMKPGPWLGKINNEAIRWQFDNPTGTDQELITHLKAILPKYL.

Belongs to the tRNA nucleotidyltransferase/poly(A) polymerase family.

The protein resides in the mitochondrion. It is found in the cytoplasm. Its subcellular location is the nucleus. It carries out the reaction a tRNA precursor + 2 CTP + ATP = a tRNA with a 3' CCA end + 3 diphosphate. Functionally, nucleotidyltransferase that catalyzes the addition and repair of the essential 3'-terminal CCA sequence in tRNAs, which is necessary for the attachment of amino acids to the 3' terminus of tRNA molecules, using CTP and ATP as substrates. tRNA 3'-terminal CCA addition is required both for tRNA processing and repair. Also involved in tRNA surveillance by mediating tandem CCA addition to generate a CCACCA at the 3' terminus of unstable tRNAs. While stable tRNAs receive only 3'-terminal CCA, unstable tRNAs are marked with CCACCA and rapidly degraded. The structural flexibility of RNA controls the choice between CCA versus CCACCA addition: following the first CCA addition cycle, nucleotide-binding to the active site triggers a clockwise screw motion, producing torque on the RNA. This ejects stable RNAs, whereas unstable RNAs are refolded while bound to the enzyme and subjected to a second CCA catalytic cycle. This chain is CCA tRNA nucleotidyltransferase, mitochondrial (CCA1), found in Saccharomyces cerevisiae (strain ATCC 204508 / S288c) (Baker's yeast).